The sequence spans 500 residues: Hexokinase-3 (500 aa).

Residues 4–24 traverse the membrane as a helical segment; sequence VGLGVAVGCAAVTCAIAAALV. Residues 35 to 487 enclose the Hexokinase domain; the sequence is RRAVALLREF…SGVGAALLAA (453 aa). Positions 90–222 are hexokinase small subdomain; sequence SGSEEGVYYS…GLNVRVTALV (133 aa). Residues glycine 104, threonine 105, and asparagine 106 each contribute to the ADP site. Residues threonine 188, lysine 189, asparagine 223, and aspartate 224 each contribute to the D-glucose site. The segment at 223 to 476 is hexokinase large subdomain; sequence NDTVGTLALG…RNVTLRVTED (254 aa). Serine 247 provides a ligand contact to ADP. D-glucose contacts are provided by asparagine 250, glutamate 278, and glutamate 309. Glycine 441 provides a ligand contact to ADP.

This sequence belongs to the hexokinase family. Expressed in roots, leaves, flowers, immature seeds and seed coat. Expressed in young shoots, tiller buds, endosperm seven days after fertilization, and interconnecting tissues such as pulvini and nodes.

It is found in the mitochondrion outer membrane. It catalyses the reaction a D-hexose + ATP = a D-hexose 6-phosphate + ADP + H(+). It carries out the reaction D-fructose + ATP = D-fructose 6-phosphate + ADP + H(+). The enzyme catalyses D-glucose + ATP = D-glucose 6-phosphate + ADP + H(+). It functions in the pathway carbohydrate metabolism; hexose metabolism. The protein operates within carbohydrate degradation; glycolysis; D-glyceraldehyde 3-phosphate and glycerone phosphate from D-glucose: step 1/4. Its function is as follows. Fructose and glucose phosphorylating enzyme. Involved in the regulation of cell expansion in spikelet hulls, grain size, and gibberellin biosynthesis and homeostasis. The polypeptide is Hexokinase-3 (Oryza sativa subsp. japonica (Rice)).